A 1381-amino-acid polypeptide reads, in one-letter code: Non-structural polyprotein 1AB (1381 aa).

The stretch at 121-160 (VLVQEHKKLDSDLKESRRELSQLKLEHSLLRHDYERLVRE) forms a coiled coil. 5 consecutive transmembrane segments (helical) span residues 169–189 (FKFS…MSAV), 249–269 (LALG…LVGT), 279–299 (LYML…VALA), 324–344 (AFAI…CLAM), and 365–385 (FSHL…AILI). Residues His-477, Asp-506, and Ser-569 each act as charge relay system; for serine protease activity in the active site. The residue at position 694 (Tyr-694) is an O-(5'-phospho-RNA)-tyrosine. Positions 703 to 732 (TRDQLREMAEAAREADDDFDDYEEEKNEVD) form a coiled coil. Positions 856-879 (MQRKKQKPKKREEGPERGPINPDE) are disordered. Residues 1122-1254 (SVFIEFDWTR…TFDHVPPDYV (133 aa)) enclose the RdRp catalytic domain.

This sequence belongs to the astroviridae polyprotein 1AB family. As to quaternary structure, monomer. Post-translationally, cleaved by the viral and host proteases. The protease is probably autocatalytically cleaved.

It is found in the host membrane. It carries out the reaction RNA(n) + a ribonucleoside 5'-triphosphate = RNA(n+1) + diphosphate. Its function is as follows. Responsible for the cleavage of the polyprotein into functional products. Functionally, protein covalently attached to the 5' extremity of the genomic and subgenomic RNAs. It may serve as a primer for the replicase. This chain is Non-structural polyprotein 1AB (ORF1), found in Neovison vison (American mink).